The following is a 459-amino-acid chain: Nuclear distribution protein PAC1-2 (459 aa).

Positions 56 to 83 (TSIVRLQKKIMDLESRNAALQTELANLT) form a coiled coil. WD repeat units follow at residues 108–149 (SHRD…RTVK), 151–191 (HTRA…KNIR), 195–244 (GHDH…KTLR), 246–284 (HTAW…SDHK), 306–348 (QYLA…LGTL), 350–389 (GHDN…KCVK), 394–438 (AHER…DTPD), and 440–459 (QVRC…VFAD).

The protein belongs to the WD repeat LIS1/nudF family. In terms of assembly, self-associates. Interacts with NDL1 and dynein.

It is found in the cytoplasm. The protein resides in the cytoskeleton. The protein localises to the spindle pole. Its function is as follows. Positively regulates the activity of the minus-end directed microtubule motor protein dynein. May enhance dynein-mediated microtubule sliding by targeting dynein to the microtubule plus end. Required for nuclear migration during vegetative growth as well as development. Required for retrograde early endosome (EE) transport from the hyphal tip. Required for localization of dynein to the mitotic spindle poles. Recruits additional proteins to the dynein complex at SPBs. This chain is Nuclear distribution protein PAC1-2, found in Uncinocarpus reesii (strain UAMH 1704).